The sequence spans 148 residues: NADH-quinone oxidoreductase subunit C (148 aa).

This sequence belongs to the complex I 30 kDa subunit family. NDH-1 is composed of 14 different subunits. Subunits NuoB, C, D, E, F, and G constitute the peripheral sector of the complex.

The protein resides in the cell membrane. It carries out the reaction a quinone + NADH + 5 H(+)(in) = a quinol + NAD(+) + 4 H(+)(out). In terms of biological role, NDH-1 shuttles electrons from NADH, via FMN and iron-sulfur (Fe-S) centers, to quinones in the respiratory chain. The immediate electron acceptor for the enzyme in this species is believed to be a menaquinone. Couples the redox reaction to proton translocation (for every two electrons transferred, four hydrogen ions are translocated across the cytoplasmic membrane), and thus conserves the redox energy in a proton gradient. The chain is NADH-quinone oxidoreductase subunit C from Moorella thermoacetica (strain ATCC 39073 / JCM 9320).